A 289-amino-acid chain; its full sequence is Rhodopsin (289 aa).

At tyrosine 1–alanine 7 the chain is on the extracellular side. A helical membrane pass occupies residues tyrosine 8 to valine 32. Residues threonine 33–asparagine 44 lie on the Cytoplasmic side of the membrane. Residues tyrosine 45 to tyrosine 67 form a helical membrane-spanning segment. Residues threonine 68–cysteine 81 are Extracellular-facing. Cysteine 81 and cysteine 158 are oxidised to a cystine. The chain crosses the membrane as a helical span at residues asparagine 82 to isoleucine 104. The short motif at glutamate 105–tryptophan 107 is the 'Ionic lock' involved in activated form stabilization element. Residues glutamate 105–histidine 123 lie on the Cytoplasmic side of the membrane. The helical transmembrane segment at alanine 124–valine 144 threads the bilayer. Residues glycine 145–serine 173 lie on the Extracellular side of the membrane. Asparagine 171 carries an N-linked (GlcNAc...) asparagine glycan. A helical membrane pass occupies residues phenylalanine 174–glycine 195. The Cytoplasmic segment spans residues arginine 196–arginine 223. A helical membrane pass occupies residues methionine 224–tryptophan 245. The Extracellular portion of the chain corresponds to isoleucine 246–isoleucine 257. A helical transmembrane segment spans residues phenylalanine 258–cysteine 279. Lysine 267 bears the N6-(retinylidene)lysine mark. Residues methionine 280–isoleucine 289 lie on the Cytoplasmic side of the membrane.

It belongs to the G-protein coupled receptor 1 family. Opsin subfamily. In terms of processing, phosphorylated on some or all of the serine and threonine residues present in the C-terminal region. Post-translationally, contains one covalently linked retinal chromophore.

The protein resides in the membrane. It localises to the cell projection. It is found in the cilium. Its subcellular location is the photoreceptor outer segment. Its function is as follows. Photoreceptor required for image-forming vision at low light intensity. While most salt water fish species use retinal as chromophore, most freshwater fish use 3-dehydroretinal, or a mixture of retinal and 3-dehydroretinal. Light-induced isomerization of 11-cis to all-trans retinal triggers a conformational change that activates signaling via G-proteins. Subsequent receptor phosphorylation mediates displacement of the bound G-protein alpha subunit by arrestin and terminates signaling. The polypeptide is Rhodopsin (rho) (Cottinella boulengeri (Short-headed sculpin)).